The following is a 339-amino-acid chain: WAT1-related protein At5g40210 (339 aa).

Transmembrane regions (helical) follow at residues 11–31 (GWILTAMVVTEFSNVGVNTLV), 42–62 (FVVLVYSYTFGSLLLLPLTFF), 74–94 (FSILCNMGILGLIASAFQILG), 104–124 (TLSSAMSNVNPAFTFILAVVF), 140–160 (VLGTILSIIGALVVTLYHGPM), 168–188 (WIIGGGLLALQYILVSVSYLV), 200–220 (VVVTLVHNVCIAVVCAFVSLL), 233–253 (FDITLITVVATGILNSGYYVI), 266–286 (LSMFKPLSILIAAVSTFIFLG), and 289–309 (LYLGSVMGGILISIGFYMVLW). The region spanning 29–154 (TLVKAATSKG…LSIIGALVVT (126 aa)) is the EamA domain.

It belongs to the drug/metabolite transporter (DMT) superfamily. Plant drug/metabolite exporter (P-DME) (TC 2.A.7.4) family.

The protein resides in the membrane. The sequence is that of WAT1-related protein At5g40210 from Arabidopsis thaliana (Mouse-ear cress).